The primary structure comprises 570 residues: Methionine--tRNA ligase (570 aa).

The 'HIGH' region signature appears at 14 to 24 (PYINGIKHLGN). Residues C146, C149, C159, and C162 each contribute to the Zn(2+) site. Positions 347–351 (QFSTS) match the 'KMSKS' region motif. ATP is bound at residue T350.

Belongs to the class-I aminoacyl-tRNA synthetase family. MetG type 1 subfamily. In terms of assembly, monomer. Requires Zn(2+) as cofactor.

The protein localises to the cytoplasm. It catalyses the reaction tRNA(Met) + L-methionine + ATP = L-methionyl-tRNA(Met) + AMP + diphosphate. In terms of biological role, is required not only for elongation of protein synthesis but also for the initiation of all mRNA translation through initiator tRNA(fMet) aminoacylation. This Jannaschia sp. (strain CCS1) protein is Methionine--tRNA ligase.